Consider the following 211-residue polypeptide: ATP phosphoribosyltransferase (211 aa).

It belongs to the ATP phosphoribosyltransferase family. Short subfamily. In terms of assembly, heteromultimer composed of HisG and HisZ subunits.

It localises to the cytoplasm. It catalyses the reaction 1-(5-phospho-beta-D-ribosyl)-ATP + diphosphate = 5-phospho-alpha-D-ribose 1-diphosphate + ATP. The protein operates within amino-acid biosynthesis; L-histidine biosynthesis; L-histidine from 5-phospho-alpha-D-ribose 1-diphosphate: step 1/9. Catalyzes the condensation of ATP and 5-phosphoribose 1-diphosphate to form N'-(5'-phosphoribosyl)-ATP (PR-ATP). Has a crucial role in the pathway because the rate of histidine biosynthesis seems to be controlled primarily by regulation of HisG enzymatic activity. The polypeptide is ATP phosphoribosyltransferase (Pseudomonas fluorescens (strain ATCC BAA-477 / NRRL B-23932 / Pf-5)).